Here is a 603-residue protein sequence, read N- to C-terminus: Serine/threonine-protein kinase HAL4/SAT4 (603 aa).

Polar residues-rich tracts occupy residues 1 to 15, 30 to 60, and 68 to 85; these read MTGM…PQQT, RSGS…SASK, and TPTT…NTAG. 3 disordered regions span residues 1–86, 150–171, and 267–301; these read MTGM…TAGV, LSPK…PTPT, and DKYP…THNI. Positions 159 to 171 are enriched in low complexity; the sequence is NSNTAITPAPTPT. Positions 282–296 are enriched in basic and acidic residues; the sequence is PERDIYRSDQKDSKN. The 275-residue stretch at 316 to 590 folds into the Protein kinase domain; it reads GRCQEVLGKG…GKQILNSEWG (275 aa). ATP is bound by residues 322-330 and K353; that span reads LGKGAFGVV. D449 acts as the Proton acceptor in catalysis.

The protein belongs to the protein kinase superfamily. Ser/Thr protein kinase family.

It catalyses the reaction L-seryl-[protein] + ATP = O-phospho-L-seryl-[protein] + ADP + H(+). The enzyme catalyses L-threonyl-[protein] + ATP = O-phospho-L-threonyl-[protein] + ADP + H(+). Promotes K(+) uptake, by the potassium transporter TRK1-TRK2, which leads to the subsequent cellular resistance to toxic cations such as Na(+), Li(+) and Ca(2+). This is Serine/threonine-protein kinase HAL4/SAT4 (SAT4) from Saccharomyces cerevisiae (strain ATCC 204508 / S288c) (Baker's yeast).